The chain runs to 264 residues: Flagellar brake protein YcgR 1 (264 aa).

Residues 132 to 249 form the PilZ domain; the sequence is QRREFFRLES…RLAMIERYIA (118 aa).

It belongs to the YcgR family. In terms of assembly, monomer. Interacts with the flagellar basal bodies.

The protein localises to the bacterial flagellum basal body. Its function is as follows. Acts as a flagellar brake, regulating swimming and swarming in a bis-(3'-5') cyclic diguanylic acid (c-di-GMP)-dependent manner. Binds 1 c-di-GMP dimer per subunit. Increasing levels of c-di-GMP lead to decreased motility. In Dechloromonas aromatica (strain RCB), this protein is Flagellar brake protein YcgR 1.